Here is a 387-residue protein sequence, read N- to C-terminus: Galactokinase (387 aa).

33-36 (EHID) provides a ligand contact to substrate. ATP contacts are provided by residues S67 and 124–130 (GAGLSSS). S130 and E162 together coordinate Mg(2+). D174 serves as the catalytic Proton acceptor. Substrate is bound at residue Y224.

The protein belongs to the GHMP kinase family. GalK subfamily.

The protein resides in the cytoplasm. The catalysed reaction is alpha-D-galactose + ATP = alpha-D-galactose 1-phosphate + ADP + H(+). It participates in carbohydrate metabolism; galactose metabolism. Functionally, catalyzes the transfer of the gamma-phosphate of ATP to D-galactose to form alpha-D-galactose-1-phosphate (Gal-1-P). The protein is Galactokinase of Clostridium perfringens (strain SM101 / Type A).